Reading from the N-terminus, the 938-residue chain is Isoleucine--tRNA ligase (938 aa).

The 'HIGH' region motif lies at 58-68; it reads PYANGNIHIGH. Position 562 (Glu562) interacts with L-isoleucyl-5'-AMP. The short motif at 603-607 is the 'KMSKS' region element; that stretch reads KMSKS. Lys606 serves as a coordination point for ATP. Zn(2+) contacts are provided by Cys901, Cys904, Cys921, and Cys924.

Belongs to the class-I aminoacyl-tRNA synthetase family. IleS type 1 subfamily. In terms of assembly, monomer. Zn(2+) serves as cofactor.

The protein localises to the cytoplasm. It catalyses the reaction tRNA(Ile) + L-isoleucine + ATP = L-isoleucyl-tRNA(Ile) + AMP + diphosphate. Functionally, catalyzes the attachment of isoleucine to tRNA(Ile). As IleRS can inadvertently accommodate and process structurally similar amino acids such as valine, to avoid such errors it has two additional distinct tRNA(Ile)-dependent editing activities. One activity is designated as 'pretransfer' editing and involves the hydrolysis of activated Val-AMP. The other activity is designated 'posttransfer' editing and involves deacylation of mischarged Val-tRNA(Ile). The sequence is that of Isoleucine--tRNA ligase from Actinobacillus pleuropneumoniae serotype 5b (strain L20).